We begin with the raw amino-acid sequence, 271 residues long: Troponin T, fast skeletal muscle (271 aa).

The span at 1–21 (MSDEEVEHVEEEYEEEEEAQE) shows a compositional bias: acidic residues. The interval 1–74 (MSDEEVEHVE…EKVDFDDIQK (74 aa)) is disordered. Residue S2 is modified to N-acetylserine. S2 bears the Phosphoserine mark. Composition is skewed to basic and acidic residues over residues 31–53 (PEVH…EKPR) and 62–74 (PEGE…DIQK). Position 90 is a phosphoserine (S90). Positions 113 to 155 (RAERAEQQRIRAEKERERQNRLAEEKARREEEDAKRRAEDDLK) are enriched in basic and acidic residues. The segment at 113-194 (RAERAEQQRI…REMKKKVLAE (82 aa)) is disordered. S161, S168, and S169 each carry phosphoserine. The span at 183–194 (TAREMKKKVLAE) shows a compositional bias: basic and acidic residues. S205 is modified (phosphoserine). Residue Y221 is modified to Phosphotyrosine. Residues 248-271 (IDQAQKHSKKAGTAPKGKVGGRWK) form a disordered region.

This sequence belongs to the troponin T family.

In terms of biological role, troponin T is the tropomyosin-binding subunit of troponin, the thin filament regulatory complex which confers calcium-sensitivity to striated muscle actomyosin ATPase activity. This is Troponin T, fast skeletal muscle (Tnnt3) from Bos taurus (Bovine).